Reading from the N-terminus, the 268-residue chain is Putative hydro-lyase Arad_8587 (268 aa).

It belongs to the D-glutamate cyclase family.

This Rhizobium rhizogenes (strain K84 / ATCC BAA-868) (Agrobacterium radiobacter) protein is Putative hydro-lyase Arad_8587.